The sequence spans 78 residues: Exodeoxyribonuclease 7 small subunit (78 aa).

Belongs to the XseB family. As to quaternary structure, heterooligomer composed of large and small subunits.

The protein localises to the cytoplasm. The enzyme catalyses Exonucleolytic cleavage in either 5'- to 3'- or 3'- to 5'-direction to yield nucleoside 5'-phosphates.. Bidirectionally degrades single-stranded DNA into large acid-insoluble oligonucleotides, which are then degraded further into small acid-soluble oligonucleotides. This Nocardia farcinica (strain IFM 10152) protein is Exodeoxyribonuclease 7 small subunit.